The primary structure comprises 497 residues: Serine/threonine-protein phosphatase 2A 56 kDa regulatory subunit beta isoform (497 aa).

Residues 1–19 (METKLPPASTPTSPSSPGL) are compositionally biased toward low complexity. Disordered stretches follow at residues 1–55 (METK…YQSN) and 473–497 (QGTQGAKEAPVPRPTPQVAASGGQS). A phosphoserine mark is found at serine 32, serine 35, serine 44, serine 46, serine 47, and serine 48. A compositionally biased stretch (basic residues) spans 34-45 (RSLRRARPRRSH).

The protein belongs to the phosphatase 2A regulatory subunit B56 family. Component of the serine/threonine-protein phosphatase 2A complex (PP2A). This complex consists of a common heterodimeric core enzyme, composed of a 36 kDa catalytic subunit (subunit C) and a 65 kDa constant scaffold subunit (PR65 or subunit A), that associates with a variety of regulatory subunits. Proteins that associate with the core dimer include three families of regulatory subunits B (the R2/B/PR55/B55, R3/B''/PR72/PR130/PR59 and R5/B'/B56 families), the 48 kDa variable regulatory subunit, viral proteins, and cell signaling molecules. Interacts with SGO1. Interacts with AKT1. Ubiquitinated by CUL3-KLHL15 complex; this modification leads to proteasomal degradation. In terms of tissue distribution, widely expressed at the mRNA level, with highest levels in cerebellum and lung.

Its subcellular location is the cytoplasm. Functionally, as the regulatory component of the serine/threonine-protein phosphatase 2A (PP2A) holoenzyme, modulates substrate specificity, subcellular localization, and responsiveness to phosphorylation. The phosphorylated form mediates the interaction between PP2A and AKT1, leading to AKT1 dephosphorylation. This chain is Serine/threonine-protein phosphatase 2A 56 kDa regulatory subunit beta isoform (Ppp2r5b), found in Rattus norvegicus (Rat).